A 558-amino-acid chain; its full sequence is Dihydroxy-acid dehydratase (558 aa).

D78 is a binding site for Mg(2+). C119 contributes to the [2Fe-2S] cluster binding site. 2 residues coordinate Mg(2+): D120 and K121. K121 carries the N6-carboxylysine modification. C191 contributes to the [2Fe-2S] cluster binding site. E443 is a Mg(2+) binding site. S469 serves as the catalytic Proton acceptor.

It belongs to the IlvD/Edd family. As to quaternary structure, homodimer. Requires [2Fe-2S] cluster as cofactor. Mg(2+) serves as cofactor.

It catalyses the reaction (2R)-2,3-dihydroxy-3-methylbutanoate = 3-methyl-2-oxobutanoate + H2O. The catalysed reaction is (2R,3R)-2,3-dihydroxy-3-methylpentanoate = (S)-3-methyl-2-oxopentanoate + H2O. The protein operates within amino-acid biosynthesis; L-isoleucine biosynthesis; L-isoleucine from 2-oxobutanoate: step 3/4. It functions in the pathway amino-acid biosynthesis; L-valine biosynthesis; L-valine from pyruvate: step 3/4. Functionally, functions in the biosynthesis of branched-chain amino acids. Catalyzes the dehydration of (2R,3R)-2,3-dihydroxy-3-methylpentanoate (2,3-dihydroxy-3-methylvalerate) into 2-oxo-3-methylpentanoate (2-oxo-3-methylvalerate) and of (2R)-2,3-dihydroxy-3-methylbutanoate (2,3-dihydroxyisovalerate) into 2-oxo-3-methylbutanoate (2-oxoisovalerate), the penultimate precursor to L-isoleucine and L-valine, respectively. The chain is Dihydroxy-acid dehydratase from Solidesulfovibrio magneticus (strain ATCC 700980 / DSM 13731 / RS-1) (Desulfovibrio magneticus).